Here is a 232-residue protein sequence, read N- to C-terminus: Orotidine 5'-phosphate decarboxylase (232 aa).

Substrate is bound by residues D13, K35, 62-71 (DLKFHDIPNT), T122, R182, Q191, G211, and R212. The Proton donor role is filled by K64.

This sequence belongs to the OMP decarboxylase family. Type 1 subfamily. As to quaternary structure, homodimer.

The enzyme catalyses orotidine 5'-phosphate + H(+) = UMP + CO2. Its pathway is pyrimidine metabolism; UMP biosynthesis via de novo pathway; UMP from orotate: step 2/2. Functionally, catalyzes the decarboxylation of orotidine 5'-monophosphate (OMP) to uridine 5'-monophosphate (UMP). In Pseudomonas paraeruginosa (strain DSM 24068 / PA7) (Pseudomonas aeruginosa (strain PA7)), this protein is Orotidine 5'-phosphate decarboxylase.